An 823-amino-acid polypeptide reads, in one-letter code: Protein Jade-3 (823 aa).

Positions 1-32 (MKRHRPVSSSDSSDESPSTSFTSGSMYRIKSK) are disordered. Low complexity predominate over residues 8 to 25 (SSSDSSDESPSTSFTSGS). Residues Lys30 and Lys32 each carry the N6-acetyllysine modification. The residue at position 85 (Ser85) is a Phosphoserine. The PHD-type 1 zinc-finger motif lies at 200–250 (DVICDVCRSPDSEEGNDMVFCDKCNVCVHQACYGILKVPEGSWLCRSCVLG). The C2HC pre-PHD-type zinc-finger motif lies at 252-286 (YPQCVLCPKKGGALKTTKTGTKWAHVSCALWIPEV). The PHD-type 2 zinc finger occupies 310–366 (LVCNLCKLKTGACIQCSIKSCITAFHVTCAFEHGLEMKTILDEGDEVKFKSYCLKHS). Disordered regions lie at residues 372–395 (LGEA…KTSL) and 542–576 (KLKM…VHSI). The segment covering 561–575 (DQQPHSPDSSSSVHS) has biased composition (low complexity). Ser566 bears the Phosphoserine mark. Lys601 is subject to N6-acetyllysine. Ser608 carries the phosphoserine modification. The tract at residues 609–630 (LSHSRSEAKESSPAWRTPSSEC) is disordered. Lys638 is modified (N6-acetyllysine). Composition is skewed to polar residues over residues 650-664 (SSIG…SKFA) and 673-684 (WSGNVTQKDSSS). The segment at 650–684 (SSIGNGKSQPNSKFAKSNGLEGSWSGNVTQKDSSS) is disordered. Position 735 is an N6-acetyllysine (Lys735). Positions 758–823 (RAPYQENDGY…HPLSHSSMQR (66 aa)) are disordered. Phosphoserine is present on residues Ser774, Ser776, and Ser780. The span at 781-809 (DGNKEKVRVRKDSSDRENPPHDSRRDCHG) shows a compositional bias: basic and acidic residues.

It belongs to the JADE family. In terms of assembly, component of the HBO1 complex composed at least of ING4 or ING5, KAT7/HBO1, MEAF6, and one of JADE1, JADE2 and JADE3. Ubiquitously expressed, with highest levels in placenta and uterus.

Its function is as follows. Scaffold subunit of some HBO1 complexes, which have a histone H4 acetyltransferase activity. The chain is Protein Jade-3 (JADE3) from Homo sapiens (Human).